We begin with the raw amino-acid sequence, 166 residues long: PTS system glucose-specific EIIA component (166 aa).

The region spanning 36–140 is the PTS EIIA type-1 domain; that stretch reads DVVFSEKIVG…SVLTPIVISN (105 aa). Positions 73 and 88 each coordinate Zn(2+). Histidine 88 acts as the Tele-phosphohistidine intermediate; for EIIA activity in catalysis. Histidine 88 carries the phosphohistidine; by HPr modification.

As to quaternary structure, heterodimer with glycerol kinase (glpk). Zn(2+) is required as a cofactor.

Its subcellular location is the cytoplasm. Its function is as follows. The phosphoenolpyruvate-dependent sugar phosphotransferase system (sugar PTS), a major carbohydrate active transport system, catalyzes the phosphorylation of incoming sugar substrates concomitantly with their translocation across the cell membrane. The enzyme II complex composed of PtsG and Crr is involved in glucose transport. This is PTS system glucose-specific EIIA component (crr) from Haemophilus influenzae (strain ATCC 51907 / DSM 11121 / KW20 / Rd).